The primary structure comprises 82 residues: Protein RALF-like 8 (82 aa).

The N-terminal stretch at Met-1–Ala-28 is a signal peptide. 2 disulfides stabilise this stretch: Cys-47-Cys-55 and Cys-67-Cys-73.

This sequence belongs to the plant rapid alkalinization factor (RALF) family. In terms of tissue distribution, expressed in leaves and flowers.

It is found in the secreted. Functionally, cell signaling peptide that may regulate plant stress, growth, and development. Mediates a rapid alkalinization of extracellular space by mediating a transient increase in the cytoplasmic Ca(2+) concentration leading to a calcium-dependent signaling events through a cell surface receptor and a concomitant activation of some intracellular mitogen-activated protein kinases. The protein is Protein RALF-like 8 (RALFL8) of Arabidopsis thaliana (Mouse-ear cress).